The primary structure comprises 240 residues: T4 protein (240 aa).

The protein belongs to the poxviruses B9 family.

The sequence is that of T4 protein from Sheeppox virus (strain KS-1) (SPPV).